Reading from the N-terminus, the 622-residue chain is 1-deoxy-D-xylulose-5-phosphate synthase (622 aa).

Thiamine diphosphate is bound by residues histidine 80 and 121–123 (GHS). Aspartate 152 lines the Mg(2+) pocket. Thiamine diphosphate is bound by residues 153–154 (GA), asparagine 181, tyrosine 288, and glutamate 370. A Mg(2+)-binding site is contributed by asparagine 181.

Belongs to the transketolase family. DXPS subfamily. As to quaternary structure, homodimer. It depends on Mg(2+) as a cofactor. Thiamine diphosphate serves as cofactor.

It carries out the reaction D-glyceraldehyde 3-phosphate + pyruvate + H(+) = 1-deoxy-D-xylulose 5-phosphate + CO2. Its pathway is metabolic intermediate biosynthesis; 1-deoxy-D-xylulose 5-phosphate biosynthesis; 1-deoxy-D-xylulose 5-phosphate from D-glyceraldehyde 3-phosphate and pyruvate: step 1/1. Its function is as follows. Catalyzes the acyloin condensation reaction between C atoms 2 and 3 of pyruvate and glyceraldehyde 3-phosphate to yield 1-deoxy-D-xylulose-5-phosphate (DXP). This Shewanella baltica (strain OS185) protein is 1-deoxy-D-xylulose-5-phosphate synthase.